A 310-amino-acid chain; its full sequence is Quinolinate synthase (310 aa).

Iminosuccinate is bound by residues histidine 27 and serine 44. Residue cysteine 89 coordinates [4Fe-4S] cluster. Iminosuccinate contacts are provided by residues 115–117 (YVN) and serine 132. Cysteine 175 lines the [4Fe-4S] cluster pocket. Iminosuccinate-binding positions include 201-203 (HPE) and threonine 222. Cysteine 267 contacts [4Fe-4S] cluster.

The protein belongs to the quinolinate synthase family. Type 2 subfamily. The cofactor is [4Fe-4S] cluster.

It is found in the cytoplasm. It carries out the reaction iminosuccinate + dihydroxyacetone phosphate = quinolinate + phosphate + 2 H2O + H(+). The protein operates within cofactor biosynthesis; NAD(+) biosynthesis; quinolinate from iminoaspartate: step 1/1. Catalyzes the condensation of iminoaspartate with dihydroxyacetone phosphate to form quinolinate. The polypeptide is Quinolinate synthase (Thermus thermophilus (strain ATCC BAA-163 / DSM 7039 / HB27)).